The primary structure comprises 219 residues: Probable GTP-binding protein EngB (219 aa).

Residues 24–207 (VQPEIAFAGR…HELIESWVRP (184 aa)) form the EngB-type G domain. Residues 32-39 (GRSNAGKS), 59-63 (GRTQH), 81-84 (DLPG), 148-151 (TKCD), and 186-188 (FSA) contribute to the GTP site. 2 residues coordinate Mg(2+): S39 and T61.

The protein belongs to the TRAFAC class TrmE-Era-EngA-EngB-Septin-like GTPase superfamily. EngB GTPase family. The cofactor is Mg(2+).

In terms of biological role, necessary for normal cell division and for the maintenance of normal septation. This is Probable GTP-binding protein EngB from Burkholderia ambifaria (strain MC40-6).